A 668-amino-acid polypeptide reads, in one-letter code: CLK4-associating serine/arginine rich protein (668 aa).

Residue S101 is modified to Phosphoserine. Disordered regions lie at residues A173–D232 and A252–H668. The span at P182–N214 shows a compositional bias: acidic residues. Positions R265 to K283 are enriched in basic residues. Residues S285 and S294 each carry the phosphoserine modification. A compositionally biased stretch (basic and acidic residues) spans A290–S313. T327 is modified (phosphothreonine). Phosphoserine occurs at positions 331 and 335. The segment covering A340–P353 has biased composition (low complexity). Positions G354–P365 are enriched in pro residues. Positions S378–S395 are enriched in low complexity. Residues S396–R435 are compositionally biased toward basic residues. Positions H436–R446 are enriched in basic and acidic residues. Over residues R475–S486 the composition is skewed to basic residues. 2 stretches are compositionally biased toward low complexity: residues H487–Q510 and Q518–S527. Position 541 is a phosphoserine (S541). Position 567 is a phosphothreonine (T567). Positions A579–S641 form a coiled coil. Basic and acidic residues-rich tracts occupy residues F584–A611 and K619–Y635. The span at S636 to R645 shows a compositional bias: low complexity. Over residues S653–H668 the composition is skewed to basic residues.

It belongs to the splicing factor SR family. In terms of assembly, probably interacts with CLK4. Phosphorylated in vitro by CLK4.

It localises to the nucleus. Functionally, probably functions as an alternative splicing regulator. May regulate the mRNA splicing of genes such as CLK1. May act by regulating members of the CLK kinase family. This chain is CLK4-associating serine/arginine rich protein (Clasrp), found in Rattus norvegicus (Rat).